We begin with the raw amino-acid sequence, 107 residues long: Large ribosomal subunit protein uL24 (107 aa).

It belongs to the universal ribosomal protein uL24 family. Part of the 50S ribosomal subunit.

In terms of biological role, one of two assembly initiator proteins, it binds directly to the 5'-end of the 23S rRNA, where it nucleates assembly of the 50S subunit. Functionally, one of the proteins that surrounds the polypeptide exit tunnel on the outside of the subunit. The chain is Large ribosomal subunit protein uL24 from Caldanaerobacter subterraneus subsp. tengcongensis (strain DSM 15242 / JCM 11007 / NBRC 100824 / MB4) (Thermoanaerobacter tengcongensis).